Consider the following 92-residue polypeptide: Probable Fe(2+)-trafficking protein (92 aa).

Belongs to the Fe(2+)-trafficking protein family.

Could be a mediator in iron transactions between iron acquisition and iron-requiring processes, such as synthesis and/or repair of Fe-S clusters in biosynthetic enzymes. This Xanthomonas oryzae pv. oryzae (strain MAFF 311018) protein is Probable Fe(2+)-trafficking protein.